The primary structure comprises 273 residues: Large ribosomal subunit protein uL2 (273 aa).

2 disordered regions span residues 28–54 (KPYAPLLEKNSKSGGRNNNGRITTRHI) and 221–273 (RGTA…RRTK). Residues 39 to 48 (KSGGRNNNGR) show a composition bias toward low complexity.

The protein belongs to the universal ribosomal protein uL2 family. As to quaternary structure, part of the 50S ribosomal subunit. Forms a bridge to the 30S subunit in the 70S ribosome.

In terms of biological role, one of the primary rRNA binding proteins. Required for association of the 30S and 50S subunits to form the 70S ribosome, for tRNA binding and peptide bond formation. It has been suggested to have peptidyltransferase activity; this is somewhat controversial. Makes several contacts with the 16S rRNA in the 70S ribosome. This Pectobacterium carotovorum subsp. carotovorum (strain PC1) protein is Large ribosomal subunit protein uL2.